A 1402-amino-acid polypeptide reads, in one-letter code: DNA-directed RNA polymerase subunit beta' (1402 aa).

The Zn(2+) site is built by C72, C74, C87, and C90. D463, D465, and D467 together coordinate Mg(2+). 4 residues coordinate Zn(2+): C811, C885, C892, and C895.

It belongs to the RNA polymerase beta' chain family. The RNAP catalytic core consists of 2 alpha, 1 beta, 1 beta' and 1 omega subunit. When a sigma factor is associated with the core the holoenzyme is formed, which can initiate transcription. The cofactor is Mg(2+). Zn(2+) is required as a cofactor.

It catalyses the reaction RNA(n) + a ribonucleoside 5'-triphosphate = RNA(n+1) + diphosphate. Its function is as follows. DNA-dependent RNA polymerase catalyzes the transcription of DNA into RNA using the four ribonucleoside triphosphates as substrates. The protein is DNA-directed RNA polymerase subunit beta' of Paracoccus denitrificans (strain Pd 1222).